Reading from the N-terminus, the 215-residue chain is Transmembrane protein 267 (215 aa).

A run of 3 helical transmembrane segments spans residues 77 to 97 (FGEV…HFFQ), 114 to 134 (FLHC…AVHL), and 178 to 198 (SSFY…LMYL).

Its subcellular location is the membrane. This is Transmembrane protein 267 from Mus musculus (Mouse).